A 138-amino-acid chain; its full sequence is Superoxide dismutase [Mn] (138 aa).

Mn(2+) contacts are provided by His-1, His-49, Asp-133, and His-137.

This sequence belongs to the iron/manganese superoxide dismutase family. Mn(2+) serves as cofactor.

The catalysed reaction is 2 superoxide + 2 H(+) = H2O2 + O2. In terms of biological role, destroys superoxide anion radicals which are normally produced within the cells and which are toxic to biological systems. This Mycobacterium celatum protein is Superoxide dismutase [Mn] (sodA).